The sequence spans 360 residues: Phenylalanine--tRNA ligase alpha subunit (360 aa).

Residue E260 coordinates Mg(2+).

The protein belongs to the class-II aminoacyl-tRNA synthetase family. Phe-tRNA synthetase alpha subunit type 1 subfamily. In terms of assembly, tetramer of two alpha and two beta subunits. Mg(2+) is required as a cofactor.

The protein localises to the cytoplasm. The catalysed reaction is tRNA(Phe) + L-phenylalanine + ATP = L-phenylalanyl-tRNA(Phe) + AMP + diphosphate + H(+). This is Phenylalanine--tRNA ligase alpha subunit from Paracoccus denitrificans (strain Pd 1222).